A 272-amino-acid chain; its full sequence is Cholesterol 25-hydroxylase (272 aa).

Asparagine 5 carries N-linked (GlcNAc...) asparagine glycosylation. Helical transmembrane passes span 38 to 58 (FFPV…FVVL), 84 to 104 (LLPC…PVTL), and 121 to 141 (LLLL…EFFV). In terms of domain architecture, Fatty acid hydroxylase spans 129–263 (LFCLLLFDME…FTHWDKILGT (135 aa)). The Histidine box-1 signature appears at 142 to 146 (WHLLH). A Histidine box-2 motif is present at residues 157-161 (HKVHH). Residues asparagine 163 and asparagine 189 are each glycosylated (N-linked (GlcNAc...) asparagine). Positions 238–244 (HHDLHHS) match the Histidine box-3 motif.

The protein belongs to the sterol desaturase family. Requires Fe cation as cofactor. In terms of processing, N-glycosylated.

It is found in the endoplasmic reticulum membrane. The enzyme catalyses cholesterol + AH2 + O2 = 25-hydroxycholesterol + A + H2O. The catalysed reaction is cholesterol + NADPH + O2 + H(+) = 25-hydroxycholesterol + NADP(+) + H2O. Functionally, catalyzes the formation of 25-hydroxycholesterol from cholesterol, leading to repress cholesterol biosynthetic enzymes. Plays a key role in cell positioning and movement in lymphoid tissues: 25-hydroxycholesterol is an intermediate in biosynthesis of 7-alpha,25-dihydroxycholesterol (7-alpha,25-OHC), an oxysterol that acts as a ligand for the G protein-coupled receptor GPR183/EBI2, a chemotactic receptor for a number of lymphoid cells. May play an important role in regulating lipid metabolism by synthesizing a corepressor that blocks sterol regulatory element binding protein (SREBP) processing. As an interferon-stimulated gene, has broad antiviral activities against a wide range of enveloped viruses, such as vesicular stomatitis virus (VSV) and SARS coronavirus-2 (SARS-CoV-2). Its product, 25-hydroxycholesterol, activates the ER-localized enzyme ACAT to induce internalization of accessible cholesterol on the plasma membrane and restricts SARS-CoV-2 S protein-mediated fusion which inhibits virus replication. In testis, production of 25-hydroxycholesterol by macrophages plays a role in Leydig cell differentiation. Required to restrain inflammation in macrophages: production of 25-hydroxycholesterol protects macrophages from cholesterol overload, thereby preventing mitochondrial DNA release and subsequent activation of the AIM2 inflammasome. This chain is Cholesterol 25-hydroxylase, found in Homo sapiens (Human).